The chain runs to 262 residues: tRNA (guanine-N(1)-)-methyltransferase (262 aa).

S-adenosyl-L-methionine is bound by residues Gly-113 and 137-142; that span reads IGDYVL.

It belongs to the RNA methyltransferase TrmD family. As to quaternary structure, homodimer.

The protein localises to the cytoplasm. It catalyses the reaction guanosine(37) in tRNA + S-adenosyl-L-methionine = N(1)-methylguanosine(37) in tRNA + S-adenosyl-L-homocysteine + H(+). Specifically methylates guanosine-37 in various tRNAs. The sequence is that of tRNA (guanine-N(1)-)-methyltransferase from Thermobifida fusca (strain YX).